The chain runs to 341 residues: MLEEEILQKLQKFGLTKYESLAYLTLLKLGPSKATDVTKESGIPHTRIYDVLSSLARKGFVDIVHGTPRLYAPVNPEIVLEKIREDLISDIERLKKAFQELYREVHGEELPEIWTVHGFENTIDRAQHIIRSAKHDILINTPYEFLEYLRGVLEKRNDVLIIVISNFSEIPLWLRNKNNVILARSGQAPWLLGTWVIGDINYALFFGTLPEDKGKERFYSFWVKSTRLIQNYVHWFYTMYFDNSEIVKPLNYERMEKPLTLSHIRTVITVLKQAGLPRNIEVIGRSLADKKQVTIKGKVIDYEYTPLTANITVKTDNKKIKVGGLGSYLEDIEGESFILLD.

Residues Ser-32 to Ser-53 constitute a DNA-binding region (H-T-H motif).

Belongs to the transcriptional regulator TrmB family. As to quaternary structure, homotetramer. Forms homooctamers in the presence of maltotriose or maltose.

Repressor activity is regulated by binding of different sugars to TrmBL1. Binding of maltose and maltotriose results in derepression of the target genes. However, high sugar concentration results in formation of octamers with high affinity for DNA, which may prevent transcription of target genes. Functionally, global transcriptional repressor of the maltodextrin transport gene cluster (mdxE operon) and most likely of all genes encoding glycolytic enzymes. Acts by binding to the conserved TGM (Thermococcales-Glycolytic-Motif) sequences in their promoter region. Can also interact with non-TGM sequences. This Pyrococcus furiosus (strain ATCC 43587 / DSM 3638 / JCM 8422 / Vc1) protein is HTH-type sugar sensing transcriptional regulator TrmBL1 (trmBL1).